The primary structure comprises 1404 residues: Probable GPI-anchored adhesin-like protein PGA55 (1404 aa).

Residues Met-1–Gly-19 form the signal peptide. 87 consecutive repeat copies span residues Val-104–Ser-109, Val-136–Glu-141, Val-156–Lys-161, Val-162–Glu-167, Val-183–Gln-188, Val-196–Glu-201, Val-203–Glu-208, Val-209–Glu-214, Val-216–Glu-221, Val-222–Glu-227, Val-228–Glu-233, Val-234–Gln-239, Val-247–Glu-252, Val-253–Ser-258, Val-261–Glu-266, Val-267–Glu-272, Val-274–Glu-279, Val-280–Glu-285, Val-286–Glu-291, Val-292–Glu-297, Val-298–Glu-303, Val-304–Gln-309, Val-317–Glu-322, Val-324–Glu-329, Val-330–Glu-335, Val-336–Glu-341, Val-343–Glu-348, Val-349–Glu-354, Val-355–Glu-360, Val-361–Gln-366, Val-374–Glu-379, Val-380–Ser-385, Val-388–Glu-393, Val-394–Glu-399, Val-401–Glu-406, Val-407–Glu-412, Val-413–Glu-418, Val-419–Glu-424, Val-425–Glu-430, Val-431–Gln-436, Val-444–Glu-449, Val-450–Glu-455, Val-457–Glu-462, Val-463–Glu-468, Val-469–Glu-474, Val-475–Gln-480, Val-488–Glu-493, Val-494–Glu-500, Val-502–Glu-507, Val-508–Glu-513, Val-515–Glu-520, Val-521–Glu-526, Val-527–Glu-532, Val-533–Gln-538, Val-546–Glu-551, Val-552–Ser-557, Val-560–Glu-565, Val-566–Glu-571, Val-573–Glu-578, Val-579–Glu-584, Val-585–Glu-590, Val-591–Gln-596, Val-604–Glu-609, Val-611–Glu-616, Val-617–Glu-622, Val-623–Glu-628, Val-629–Glu-634, Val-635–Glu-640, Val-641–Gln-646, Val-654–Glu-659, Val-660–Ser-665, Val-668–Glu-673, Val-674–Glu-679, Val-681–Glu-686, Val-687–Glu-692, Val-693–Glu-698, Val-699–Gln-704, Val-712–Glu-717, Val-719–Glu-724, Val-725–Glu-730, Val-731–Glu-736, Val-737–Glu-742, Val-743–Glu-748, Val-749–Glu-754, Val-771–Glu-776, Val-777–Gln-782, and Val-797–Glu-802. The 88 X 6 AA approximate tandem repeats stretch occupies residues Val-104–Ser-541. The segment at Ser-113 to Val-833 is disordered. Asn-817 carries N-linked (GlcNAc...) asparagine glycosylation. The 1-88 repeat unit spans residues Val-824–Ala-829. Residues Asn-994 and Asn-1074 are each glycosylated (N-linked (GlcNAc...) asparagine). The GPI-anchor amidated asparagine moiety is linked to residue Asn-1382. Residues Ala-1383–Ala-1404 constitute a propeptide, removed in mature form.

It is found in the cell membrane. Its function is as follows. Predicted GPI-anchored adhesin-like protein which may be involved in filamentous growth and chlamydospore formation. This is Probable GPI-anchored adhesin-like protein PGA55 (PGA55) from Candida albicans (strain SC5314 / ATCC MYA-2876) (Yeast).